The following is a 301-amino-acid chain: tRNA-cytidine(32) 2-sulfurtransferase (301 aa).

The PP-loop motif signature appears at 47–52 (SGGKDS). Cys122, Cys125, and Cys213 together coordinate [4Fe-4S] cluster.

It belongs to the TtcA family. Homodimer. Mg(2+) is required as a cofactor. [4Fe-4S] cluster serves as cofactor.

It is found in the cytoplasm. The catalysed reaction is cytidine(32) in tRNA + S-sulfanyl-L-cysteinyl-[cysteine desulfurase] + AH2 + ATP = 2-thiocytidine(32) in tRNA + L-cysteinyl-[cysteine desulfurase] + A + AMP + diphosphate + H(+). It participates in tRNA modification. Its function is as follows. Catalyzes the ATP-dependent 2-thiolation of cytidine in position 32 of tRNA, to form 2-thiocytidine (s(2)C32). The sulfur atoms are provided by the cysteine/cysteine desulfurase (IscS) system. The sequence is that of tRNA-cytidine(32) 2-sulfurtransferase from Photobacterium profundum (strain SS9).